An 87-amino-acid chain; its full sequence is Small ribosomal subunit protein bS20 (87 aa).

Basic residues predominate over residues 1 to 15 (MANHKSAMKRIKQTA). A disordered region spans residues 1-27 (MANHKSAMKRIKQTAKRTERNKHERST). Over residues 16–27 (KRTERNKHERST) the composition is skewed to basic and acidic residues.

This sequence belongs to the bacterial ribosomal protein bS20 family.

In terms of biological role, binds directly to 16S ribosomal RNA. In Citrifermentans bemidjiense (strain ATCC BAA-1014 / DSM 16622 / JCM 12645 / Bem) (Geobacter bemidjiensis), this protein is Small ribosomal subunit protein bS20.